Consider the following 426-residue polypeptide: Serine--tRNA ligase (426 aa).

233–235 (TAE) provides a ligand contact to L-serine. Residue 264–266 (RSE) participates in ATP binding. Glutamate 287 is a binding site for L-serine. Position 351–354 (351–354 (EISS)) interacts with ATP. L-serine is bound at residue serine 387.

Belongs to the class-II aminoacyl-tRNA synthetase family. Type-1 seryl-tRNA synthetase subfamily. Homodimer. The tRNA molecule binds across the dimer.

It is found in the cytoplasm. The enzyme catalyses tRNA(Ser) + L-serine + ATP = L-seryl-tRNA(Ser) + AMP + diphosphate + H(+). It carries out the reaction tRNA(Sec) + L-serine + ATP = L-seryl-tRNA(Sec) + AMP + diphosphate + H(+). The protein operates within aminoacyl-tRNA biosynthesis; selenocysteinyl-tRNA(Sec) biosynthesis; L-seryl-tRNA(Sec) from L-serine and tRNA(Sec): step 1/1. Its function is as follows. Catalyzes the attachment of serine to tRNA(Ser). Is also able to aminoacylate tRNA(Sec) with serine, to form the misacylated tRNA L-seryl-tRNA(Sec), which will be further converted into selenocysteinyl-tRNA(Sec). The sequence is that of Serine--tRNA ligase from Clostridium botulinum (strain Langeland / NCTC 10281 / Type F).